Consider the following 202-residue polypeptide: Nascent polypeptide-associated complex subunit alpha (202 aa).

Positions Met-1–Val-19 are enriched in basic and acidic residues. The disordered stretch occupies residues Met-1–Val-41. Residues Ser-45 to Ala-110 enclose the NAC-A/B domain. Low complexity predominate over residues Gln-117–Glu-127. The disordered stretch occupies residues Gln-117 to Ala-165. The segment covering His-128–Glu-149 has biased composition (basic and acidic residues). Acidic residues predominate over residues Glu-150 to Gly-162. A UBA domain is found at Leu-163 to Ile-202.

Belongs to the NAC-alpha family. Part of the nascent polypeptide-associated complex (NAC), consisting of egd2 and egd1. NAC associates with ribosomes via egd1.

It is found in the cytoplasm. It localises to the nucleus. Component of the nascent polypeptide-associated complex (NAC), a dynamic component of the ribosomal exit tunnel, protecting the emerging polypeptides from interaction with other cytoplasmic proteins to ensure appropriate nascent protein targeting. The NAC complex also promotes mitochondrial protein import by enhancing productive ribosome interactions with the outer mitochondrial membrane and blocks the inappropriate interaction of ribosomes translating non-secretory nascent polypeptides with translocation sites in the membrane of the endoplasmic reticulum. Egd2 may also be involved in transcription regulation. The chain is Nascent polypeptide-associated complex subunit alpha (egd2) from Aspergillus oryzae (strain ATCC 42149 / RIB 40) (Yellow koji mold).